Consider the following 1793-residue polypeptide: Protein TIC 214 (1793 aa).

6 consecutive transmembrane segments (helical) span residues 11–31 (LVSL…YYGF), 64–84 (FITG…HIAL), 90–112 (ITVI…NFLN), 129–149 (IFFQ…SSIL), 172–192 (VGWL…LVWI), and 222–242 (IFLI…PPIY). The disordered stretch occupies residues 1504–1524 (DIEEDYGESDSKKGGKDKNKK).

This sequence belongs to the TIC214 family. As to quaternary structure, part of the Tic complex.

It localises to the plastid. The protein resides in the chloroplast inner membrane. Involved in protein precursor import into chloroplasts. May be part of an intermediate translocation complex acting as a protein-conducting channel at the inner envelope. This is Protein TIC 214 from Lotus japonicus (Lotus corniculatus var. japonicus).